Here is a 415-residue protein sequence, read N- to C-terminus: Diaminopimelate decarboxylase (415 aa).

Position 54 is an N6-(pyridoxal phosphate)lysine (Lys54). Residues Gly223 and 264 to 267 (EPGR) contribute to the pyridoxal 5'-phosphate site. 3 residues coordinate substrate: Arg267, Arg303, and Tyr307. Cys338 (proton donor) is an active-site residue. Substrate contacts are provided by Glu339 and Tyr374. Position 374 (Tyr374) interacts with pyridoxal 5'-phosphate.

The protein belongs to the Orn/Lys/Arg decarboxylase class-II family. LysA subfamily. Homodimer. The cofactor is pyridoxal 5'-phosphate.

It catalyses the reaction meso-2,6-diaminopimelate + H(+) = L-lysine + CO2. It functions in the pathway amino-acid biosynthesis; L-lysine biosynthesis via DAP pathway; L-lysine from DL-2,6-diaminopimelate: step 1/1. In terms of biological role, specifically catalyzes the decarboxylation of meso-diaminopimelate (meso-DAP) to L-lysine. In Buchnera aphidicola subsp. Schizaphis graminum (strain Sg), this protein is Diaminopimelate decarboxylase.